A 60-amino-acid polypeptide reads, in one-letter code: Large ribosomal subunit protein uL30 (60 aa).

The protein belongs to the universal ribosomal protein uL30 family. Part of the 50S ribosomal subunit.

This Leptothrix cholodnii (strain ATCC 51168 / LMG 8142 / SP-6) (Leptothrix discophora (strain SP-6)) protein is Large ribosomal subunit protein uL30.